Here is a 691-residue protein sequence, read N- to C-terminus: Lacticin-481/lactococcin-DR transport/processing ATP-binding protein lcnDR3 (691 aa).

The Peptidase C39 domain occupies 6 to 130; it reads QNNEQDCLLA…KKFSGYIITL (125 aa). Cys12 is a catalytic residue. Residues 158-434 enclose the ABC transmembrane type-1 domain; it reads TFLYIFSLFI…IQDVMFEISR (277 aa). Transmembrane regions (helical) follow at residues 159-179, 189-209, 262-284, 289-311, and 385-405; these read FLYIFSLFISQIVALWFSIIL, ITYSFIMMISLVLFQTLSLLM, GILLKIFPSLLNFFTVFIVIIYL, FTLTLFLVIMNLLYMIFSFSLIS, and ICVILMMIFGIYLNQGNLVSI. Positions 464 to 689 constitute an ABC transporter domain; the sequence is IILKDISYSY…LLNDSYNSFV (226 aa). ATP is bound at residue 497–504; that stretch reads GKSGSGKS.

It belongs to the ABC transporter superfamily.

The protein resides in the cell membrane. Functionally, probably implicated in the export process of the lantibiotic lacticin-481/lactococcin-DR. This is Lacticin-481/lactococcin-DR transport/processing ATP-binding protein lcnDR3 (lcnDR3) from Lactococcus lactis subsp. lactis (Streptococcus lactis).